The sequence spans 265 residues: Large ribosomal subunit protein eL8 (265 aa).

It belongs to the eukaryotic ribosomal protein eL8 family. As to quaternary structure, interacts with cmd-1 in the presence of Ca(2+).

This chain is Large ribosomal subunit protein eL8, found in Caenorhabditis elegans.